We begin with the raw amino-acid sequence, 148 residues long: MFDVTLLILLGLAALGFISHNTTVAVSILVLIIVRVTPLSTFFPWIEKQGLSIGIIILTIGVMAPIASGTLPPSTLIHSFLNWKSLVAIAVGVIVSWLGGRGVTLMGSQPQLVAGLLVGTVLGVALFRGVPVGPLIAAGLVSLIVGKQ.

A run of 4 helical transmembrane segments spans residues 14–34 (ALGF…LIIV), 51–71 (LSIG…SGTL), 86–106 (LVAI…VTLM), and 121–141 (VLGV…AGLV).

It belongs to the UPF0756 family.

The protein localises to the cell membrane. The polypeptide is UPF0756 membrane protein YeaL (Shigella flexneri).